A 482-amino-acid polypeptide reads, in one-letter code: UDP-N-acetylmuramate--L-alanine ligase (482 aa).

123 to 129 (GTHGKTT) is an ATP binding site.

The protein belongs to the MurCDEF family.

The protein resides in the cytoplasm. The catalysed reaction is UDP-N-acetyl-alpha-D-muramate + L-alanine + ATP = UDP-N-acetyl-alpha-D-muramoyl-L-alanine + ADP + phosphate + H(+). The protein operates within cell wall biogenesis; peptidoglycan biosynthesis. Functionally, cell wall formation. The chain is UDP-N-acetylmuramate--L-alanine ligase from Pseudomonas putida (strain ATCC 47054 / DSM 6125 / CFBP 8728 / NCIMB 11950 / KT2440).